The sequence spans 164 residues: UPF0114 protein KPK_0696 (164 aa).

4 consecutive transmembrane segments (helical) span residues 15–35, 53–73, 109–126, and 136–156; these read LLAP…IKFF, LILT…LVMV, VAAS…RVFM, and LMWY…MGYL.

This sequence belongs to the UPF0114 family.

The protein localises to the cell membrane. The protein is UPF0114 protein KPK_0696 of Klebsiella pneumoniae (strain 342).